Consider the following 432-residue polypeptide: Methylenetetrahydrofolate--tRNA-(uracil-5-)-methyltransferase TrmFO (432 aa).

7-12 (GGGLAG) is a binding site for FAD.

This sequence belongs to the MnmG family. TrmFO subfamily. The cofactor is FAD.

It localises to the cytoplasm. The enzyme catalyses uridine(54) in tRNA + (6R)-5,10-methylene-5,6,7,8-tetrahydrofolate + NADH + H(+) = 5-methyluridine(54) in tRNA + (6S)-5,6,7,8-tetrahydrofolate + NAD(+). It carries out the reaction uridine(54) in tRNA + (6R)-5,10-methylene-5,6,7,8-tetrahydrofolate + NADPH + H(+) = 5-methyluridine(54) in tRNA + (6S)-5,6,7,8-tetrahydrofolate + NADP(+). Functionally, catalyzes the folate-dependent formation of 5-methyl-uridine at position 54 (M-5-U54) in all tRNAs. The protein is Methylenetetrahydrofolate--tRNA-(uracil-5-)-methyltransferase TrmFO of Coprothermobacter proteolyticus (strain ATCC 35245 / DSM 5265 / OCM 4 / BT).